The sequence spans 270 residues: MTLKLAIVGAGGRMGRQLIQAVQAAEGVELGAAFERKGSSLIGADAGELAGLGELGIKVAEDLAAEKDKFDIIIDFTRPEGSLEHIKFCVANNKKLILGTTGFDDAGKQAIGKAAEKTAIVFASNYSVGVNLVFKLLEKAAKVMGDYSDIEIIEAHHRHKVDAPSGTALSMGEHIAKTLGRDLKVNGVFSREGITGERKRTDIGFSTIRAADVVGEHTVWFADIGERVEISHKASSRMTFANGAVRAAKWLANKQIGLFDMTDVLDLNNL.

NAD(+) contacts are provided by residues 9–14 (GAGGRM) and Glu-35. Arg-36 is an NADP(+) binding site. NAD(+) is bound by residues 99–101 (GTT) and 123–126 (ASNY). The Proton donor/acceptor role is filled by His-156. His-157 lines the (S)-2,3,4,5-tetrahydrodipicolinate pocket. Lys-160 (proton donor) is an active-site residue. 166-167 (GT) contributes to the (S)-2,3,4,5-tetrahydrodipicolinate binding site.

This sequence belongs to the DapB family.

The protein resides in the cytoplasm. The enzyme catalyses (S)-2,3,4,5-tetrahydrodipicolinate + NAD(+) + H2O = (2S,4S)-4-hydroxy-2,3,4,5-tetrahydrodipicolinate + NADH + H(+). It carries out the reaction (S)-2,3,4,5-tetrahydrodipicolinate + NADP(+) + H2O = (2S,4S)-4-hydroxy-2,3,4,5-tetrahydrodipicolinate + NADPH + H(+). It functions in the pathway amino-acid biosynthesis; L-lysine biosynthesis via DAP pathway; (S)-tetrahydrodipicolinate from L-aspartate: step 4/4. Catalyzes the conversion of 4-hydroxy-tetrahydrodipicolinate (HTPA) to tetrahydrodipicolinate. This Mannheimia succiniciproducens (strain KCTC 0769BP / MBEL55E) protein is 4-hydroxy-tetrahydrodipicolinate reductase.